Reading from the N-terminus, the 516-residue chain is Extracellular endo-inulinase inu2 (516 aa).

The signal sequence occupies residues 1–23 (MLNPKVAYMVWMTCLGLTLPSQA). Substrate is bound by residues 41 to 43 (MNE) and N61. The active site involves E43. 2 N-linked (GlcNAc...) asparagine glycosylation sites follow: N108 and N109. Substrate is bound at residue D176. A glycan (N-linked (GlcNAc...) asparagine) is linked at N210. Substrate is bound at residue N320. N372 carries an N-linked (GlcNAc...) asparagine glycan.

The protein belongs to the glycosyl hydrolase 32 family.

It is found in the secreted. The enzyme catalyses Endohydrolysis of (2-&gt;1)-beta-D-fructosidic linkages in inulin.. Its function is as follows. Endo-inulinase involved in utilization of the plant storage polymer inulin, consisting of fructooligosaccharides with a degree of polymerization (DP) value from 2 to 60. In Aspergillus ficuum, this protein is Extracellular endo-inulinase inu2 (inu2).